Reading from the N-terminus, the 525-residue chain is Acyl-lipid (9-3)-desaturase (525 aa).

The Cytochrome b5 heme-binding domain occupies 102-176 (KSTHPLSEVA…LQDFYIGDVE (75 aa)). Residues histidine 137 and histidine 159 each coordinate heme. Residues 216–236 (VAIFAASIAIICWSKTISAVL) form a helical membrane-spanning segment. The Histidine box-1 motif lies at 254–258 (HDFLH). The helical transmembrane segment at 266–286 (WLNEVVGYVIGNAVLGFSTGW) threads the bilayer. The Histidine box-2 signature appears at 291–295 (HNLHH). 3 consecutive transmembrane segments (helical) span residues 340-360 (QHLF…FWSW), 378-398 (GTVL…LPGW), and 401-421 (LVWM…VFVL). The Histidine box-3 signature appears at 462 to 466 (QIEHH).

This sequence belongs to the fatty acid desaturase type 1 family.

The protein resides in the membrane. The catalysed reaction is (9Z,12Z,15Z)-octadecatrienoyl-containing glycerolipid + 2 Fe(II)-[cytochrome b5] + O2 + 2 H(+) = (6Z,9Z,12Z,15Z)-octadecatetraenoyl-containing glycerolipid + 2 Fe(III)-[cytochrome b5] + 2 H2O. The enzyme catalyses a (9Z,12Z)-octadecadienoyl-containing glycerolipid + 2 Fe(II)-[cytochrome b5] + O2 + 2 H(+) = (6Z,9Z,12Z)-octadecatrienoyl-containing glycerolipid + 2 Fe(III)-[cytochrome b5] + 2 H2O. Its pathway is lipid metabolism; polyunsaturated fatty acid biosynthesis. Its function is as follows. Fatty acid desaturase able to introduce a delta(6)-double bond into delta(9)-unsaturated fatty-acid substrates. Can use both linoleic acid (18:2(9Z,12Z)) and alpha-linolenic acid (18:3(9Z,12Z,15Z)) as substrates. Required for the biosynthesis of arachidonic acid (20:4(5z,8Z,11Z,14Z)). The sequence is that of Acyl-lipid (9-3)-desaturase from Physcomitrium patens (Spreading-leaved earth moss).